The sequence spans 522 residues: MSQQVIIFDTTLRDGEQALQASLSVKEKLQIALALERMGVDVMEVGFPVSSPGDFESVQTIARQIKNSRVCGLARCVEKDIDAAYEALRVADAYRIHTFLATSPMHIATKLRSTLPEVIERAVKMIRRARNYTDDVEFSCEDGGRTPIDDLCRVVEAAINAGATTINIPDTVGYTLPYEYANIFSALRARVPNIDKAILSVHTHDDLGMAVGNALAAVNAGARQIEGAMNGLGERAGNCALEETIMAIKTRGQLMNVHTRINHQEIYRTCQTVSKICNMPIPAHKAIIGSNAFAHSSGIHQDGVLKNRENYEILTPESIGLKQVQLNLTSRSGRAAVKHRMEEMGYGETEYNMDRLYDAFKALADKKGQVFDYDLEALAFINQQSEEPEYFRLDTFNVQSGSSVIATATVQLRCGDEQKTEAATGNGPVDAVYQAINRLTEFDAELVSYQLTAKGHGKDALGQVDIVVQYNGRKFHGVGLATDIVESSAKAMVNALNTIWRARQVEQELQRKSQVKDQKETV.

The Pyruvate carboxyltransferase domain maps to 5–267; it reads VIIFDTTLRD…HTRINHQEIY (263 aa). D14, H202, H204, and N238 together coordinate Mn(2+). Residues 392 to 522 form a regulatory domain region; the sequence is RLDTFNVQSG…SQVKDQKETV (131 aa).

This sequence belongs to the alpha-IPM synthase/homocitrate synthase family. LeuA type 1 subfamily. In terms of assembly, homodimer. Requires Mn(2+) as cofactor.

The protein resides in the cytoplasm. The enzyme catalyses 3-methyl-2-oxobutanoate + acetyl-CoA + H2O = (2S)-2-isopropylmalate + CoA + H(+). The protein operates within amino-acid biosynthesis; L-leucine biosynthesis; L-leucine from 3-methyl-2-oxobutanoate: step 1/4. Its function is as follows. Catalyzes the condensation of the acetyl group of acetyl-CoA with 3-methyl-2-oxobutanoate (2-ketoisovalerate) to form 3-carboxy-3-hydroxy-4-methylpentanoate (2-isopropylmalate). The protein is 2-isopropylmalate synthase of Erwinia tasmaniensis (strain DSM 17950 / CFBP 7177 / CIP 109463 / NCPPB 4357 / Et1/99).